Reading from the N-terminus, the 181-residue chain is Inorganic pyrophosphatase (181 aa).

Lys16, Arg30, and Tyr42 together coordinate substrate. Positions 52, 57, and 89 each coordinate Mg(2+). A substrate-binding site is contributed by Tyr126.

This sequence belongs to the PPase family. In terms of assembly, homohexamer. The cofactor is Mg(2+).

Its subcellular location is the cytoplasm. It catalyses the reaction diphosphate + H2O = 2 phosphate + H(+). In terms of biological role, catalyzes the hydrolysis of inorganic pyrophosphate (PPi) forming two phosphate ions. The chain is Inorganic pyrophosphatase from Ureaplasma parvum serovar 3 (strain ATCC 700970).